Reading from the N-terminus, the 376-residue chain is Zinc-regulated transporter 1 (376 aa).

The Extracellular portion of the chain corresponds to 1–50; that stretch reads MSNVTTPWWKQWDPSEVTLADKTPDDVWKTCVLQGVYFGGNEYNGNLGAR. Residues 51–71 form a helical membrane-spanning segment; the sequence is ISSVFVILFVSTFFTMFPLIS. Residues 72-80 are Cytoplasmic-facing; it reads TKVKRLRIP. Residues 81 to 101 traverse the membrane as a helical segment; that stretch reads LYVYLFAKYFGSGVIVATAFI. Topologically, residues 102-122 are extracellular; sequence HLMDPAYGAIGGTTCVGQTGN. Residues 123–143 form a helical membrane-spanning segment; it reads WGLYSWCPAIMLTSLTFTFLT. The Cytoplasmic segment spans residues 144 to 216; the sequence is DLFSSVWVER…TSMDVVQSFQ (73 aa). Residues 177 to 191 show a composition bias toward polar residues; the sequence is VSSENDNENGTANGS. A disordered region spans residues 177-196; the sequence is VSSENDNENGTANGSHDTKN. Residues 217 to 237 form a helical membrane-spanning segment; the sequence is AQFYAFLILEFGVIFHSVMIG. At 238–242 the chain is on the extracellular side; it reads LNLGS. Residues 243-263 traverse the membrane as a helical segment; sequence VGDEFSSLYPVLVFHQSFEGL. Over 264-278 the chain is Cytoplasmic; the sequence is GIGARLSAIEFPRSK. A helical transmembrane segment spans residues 279–299; it reads RWWPWALCVAYGLTTPICVAI. Over 300–310 the chain is Extracellular; the sequence is GLGVRTRYVSG. The chain crosses the membrane as a helical span at residues 311 to 331; the sequence is SYTALVISGVLDAISAGILLY. At 332-354 the chain is on the cytoplasmic side; it reads TGLVELLARDFIFNPQRTKDLRE. A helical membrane pass occupies residues 355-375; the sequence is LSFNVICTLFGAGIMALIGKW. Ala-376 is a topological domain (extracellular).

The protein belongs to the ZIP transporter (TC 2.A.5) family.

The protein resides in the membrane. Its function is as follows. High-affinity zinc transport protein. This Saccharomyces cerevisiae (strain ATCC 204508 / S288c) (Baker's yeast) protein is Zinc-regulated transporter 1 (ZRT1).